A 226-amino-acid polypeptide reads, in one-letter code: Insulin-like growth factor-binding protein 6 (226 aa).

The signal sequence occupies residues 1–25 (MTWDGLPTQPLLMLLMLLFAAGSES). Positions 26 to 99 (ALAGCPGCGP…LIGQGRCQRA (74 aa)) constitute an IGFBP N-terminal domain. Intrachain disulfides connect C30–C33, C49–C55, C63–C76, and C70–C96. The disordered stretch occupies residues 92 to 148 (GQGRCQRARGPSEETTKESKPHGGASRPRDRDRQKNPRTSAAPIRPSPVQDGEMGPC). Over residues 101 to 126 (GPSEETTKESKPHGGASRPRDRDRQK) the composition is skewed to basic and acidic residues. The Thyroglobulin type-1 domain occupies 145 to 220 (MGPCRRHLDS…SPDGQGSSQC (76 aa)). Disulfide bonds link C148/C176, C187/C198, and C200/C220. Residues 205–226 (GQPLPVSPDGQGSSQCSARSSG) are disordered. Over residues 214–226 (GQGSSQCSARSSG) the composition is skewed to polar residues.

Interacts (via C-terminal domain) with PHB2. O-glycosylated.

It is found in the secreted. Its function is as follows. IGF-binding proteins prolong the half-life of the IGFs and have been shown to either inhibit or stimulate the growth promoting effects of the IGFs on cell culture. They alter the interaction of IGFs with their cell surface receptors. Activates the MAPK signaling pathway and induces cell migration. The protein is Insulin-like growth factor-binding protein 6 (Igfbp6) of Rattus norvegicus (Rat).